Consider the following 288-residue polypeptide: ATP synthase subunit a (288 aa).

Transmembrane regions (helical) follow at residues L47–V67, L104–L124, D157–I177, P199–A219, L237–W257, and A258–V278.

This sequence belongs to the ATPase A chain family. F-type ATPases have 2 components, CF(1) - the catalytic core - and CF(0) - the membrane proton channel. CF(1) has five subunits: alpha(3), beta(3), gamma(1), delta(1), epsilon(1). CF(0) has three main subunits: a(1), b(2) and c(9-12). The alpha and beta chains form an alternating ring which encloses part of the gamma chain. CF(1) is attached to CF(0) by a central stalk formed by the gamma and epsilon chains, while a peripheral stalk is formed by the delta and b chains.

It is found in the cell inner membrane. Functionally, key component of the proton channel; it plays a direct role in the translocation of protons across the membrane. The polypeptide is ATP synthase subunit a (Psychrobacter cryohalolentis (strain ATCC BAA-1226 / DSM 17306 / VKM B-2378 / K5)).